Here is an 80-residue protein sequence, read N- to C-terminus: Cell division protein ZapB (80 aa).

Residues 3-80 are a coiled coil; the sequence is FEVLEKLEAK…SLLGKMEDVE (78 aa).

Belongs to the ZapB family. Homodimer. The ends of the coiled-coil dimer bind to each other, forming polymers. Interacts with FtsZ.

It is found in the cytoplasm. Non-essential, abundant cell division factor that is required for proper Z-ring formation. It is recruited early to the divisome by direct interaction with FtsZ, stimulating Z-ring assembly and thereby promoting cell division earlier in the cell cycle. Its recruitment to the Z-ring requires functional FtsA or ZipA. The protein is Cell division protein ZapB of Vibrio cholerae serotype O1 (strain ATCC 39541 / Classical Ogawa 395 / O395).